The primary structure comprises 576 residues: G protein-coupled receptor kinase 6 (576 aa).

Residues 1–185 (MELENIVANT…LERQPVTKNT (185 aa)) are N-terminal. In terms of domain architecture, RGS spans 53-171 (YHSLCERQPI…LDSIYFNRFL (119 aa)). Positions 186–448 (FRQYRVLGKG…AREVKEHPLF (263 aa)) constitute a Protein kinase domain. ATP-binding positions include 192–200 (LGKGGFGEV), Lys-215, and 264–270 (TLMNGGD). Asp-311 serves as the catalytic Proton acceptor. Residue 315 to 318 (ENIL) coordinates ATP. Residues 449-514 (KKLNFKRLGA…GSVSIPWQNE (66 aa)) enclose the AGC-kinase C-terminal domain. Ser-484 bears the Phosphoserine mark. Thr-485 is modified (phosphothreonine). Residues Cys-561, Cys-562, and Cys-565 are each lipidated (S-palmitoyl cysteine). A phosphoserine mark is found at Ser-566 and Ser-568.

This sequence belongs to the protein kinase superfamily. AGC Ser/Thr protein kinase family. GPRK subfamily. Interacts with GIT1. Expressed in the brain in striatal neurons.

It localises to the membrane. The catalysed reaction is [G-protein-coupled receptor] + ATP = [G-protein-coupled receptor]-phosphate + ADP + H(+). In terms of biological role, specifically phosphorylates the activated forms of G protein-coupled receptors. Such receptor phosphorylation initiates beta-arrestin-mediated receptor desensitization, internalization, and signaling events leading to their desensitization. Seems to be involved in the desensitization of D2-like dopamine receptors in striatum and chemokine receptor CXCR4 which is critical for CXCL12-induced cell chemotaxis. Phosphorylates rhodopsin (RHO) (in vitro) and a non G-protein-coupled receptor, LRP6 during Wnt signaling (in vitro). This is G protein-coupled receptor kinase 6 (Grk6) from Mus musculus (Mouse).